A 237-amino-acid chain; its full sequence is 7-cyano-7-deazaguanine synthase (237 aa).

9–19 (YSGGLDSTTCL) provides a ligand contact to ATP. 4 residues coordinate Zn(2+): cysteine 189, cysteine 199, cysteine 202, and cysteine 205.

The protein belongs to the QueC family. It depends on Zn(2+) as a cofactor.

It catalyses the reaction 7-carboxy-7-deazaguanine + NH4(+) + ATP = 7-cyano-7-deazaguanine + ADP + phosphate + H2O + H(+). The protein operates within purine metabolism; 7-cyano-7-deazaguanine biosynthesis. In terms of biological role, catalyzes the ATP-dependent conversion of 7-carboxy-7-deazaguanine (CDG) to 7-cyano-7-deazaguanine (preQ(0)). The chain is 7-cyano-7-deazaguanine synthase from Geobacter metallireducens (strain ATCC 53774 / DSM 7210 / GS-15).